Consider the following 309-residue polypeptide: Probable manganese-dependent inorganic pyrophosphatase (309 aa).

Residues histidine 9, aspartate 13, aspartate 15, aspartate 75, histidine 97, and aspartate 149 each contribute to the Mn(2+) site.

This sequence belongs to the PPase class C family. It depends on Mn(2+) as a cofactor.

It localises to the cytoplasm. It catalyses the reaction diphosphate + H2O = 2 phosphate + H(+). The chain is Probable manganese-dependent inorganic pyrophosphatase from Staphylococcus epidermidis (strain ATCC 12228 / FDA PCI 1200).